The following is a 754-amino-acid chain: DNA N-6-adenine-methyltransferase (754 aa).

Residues 4–469 form the SAM-dependent MTase C5-type domain; it reads LCYGSVCSGI…DRITKAVCRQ (466 aa). Residue Cys78 is part of the active site.

Belongs to the class I-like SAM-binding methyltransferase superfamily. C5-methyltransferase family. As to quaternary structure, homodimer. Mg(2+) serves as cofactor. The cofactor is Ca(2+).

It carries out the reaction a 2'-deoxyadenosine in DNA + S-adenosyl-L-methionine = an N(6)-methyl-2'-deoxyadenosine in DNA + S-adenosyl-L-homocysteine + H(+). Its function is as follows. Methyltransferase that methylates adenine residues in the ssDNA and dsDNA sequence 5'-AGACC-3'. Essential for genome packaging because methylation within the pac site makes the latter cleavable. May prevent degradation of viral DNA by the host restriction-modification antiviral defense system. This chain is DNA N-6-adenine-methyltransferase (dmt), found in Enterobacteriaceae (Bacteriophage P1).